The primary structure comprises 331 residues: Tumor necrosis factor receptor superfamily member 6 (331 aa).

The N-terminal stretch at 1–25 (MLGIWTLLPLVLTSVVRLLSKCVNA) is a signal peptide. The Extracellular portion of the chain corresponds to 26–171 (QVTDINSKGF…NTKCKEEDSR (146 aa)). 3 TNFR-Cys repeats span residues 47-83 (RNLE…PDCV), 84-127 (PCQE…NTKC), and 128-166 (RCKP…TKCK). 8 cysteine pairs are disulfide-bonded: C59–C73, C63–C82, C85–C101, C104–C119, C107–C127, C129–C143, C146–C157, and C149–C165. N118 is a glycosylation site (N-linked (GlcNAc...) asparagine). Residues 172-192 (SDLLWLCLLLLLIPPIVYVVI) form a helical membrane-spanning segment. Over 193 to 331 (KKACRKHRKE…NFGNEVQNLV (139 aa)) the chain is Cytoplasmic. The S-palmitoyl cysteine moiety is linked to residue C196. The tract at residues 209 to 313 (STTLNPETAI…EKIHAVILKD (105 aa)) is interaction with HIPK3. T211 carries the phosphothreonine modification. S221 bears the Phosphoserine mark. The interval 226-250 (SKYITTIAGGMTLSQVRDFVRKNGV) is interaction with CALM. Positions 226 to 310 (SKYITTIAGG…TLAEKIHAVI (85 aa)) constitute a Death domain. T318 carries the phosphothreonine modification.

Binds DAXX. Interacts with HIPK3. Part of a complex containing HIPK3 and FADD. Binds RIPK1 and FAIM2. Interacts with BABAM2 and FEM1B. Interacts with FADD. Interacts directly (via DED domain) with NOL3 (via CARD domain); inhibits death-inducing signaling complex (DISC) assembly by inhibiting the increase in FAS-FADD binding induced by FAS activation. Interacts with CALM. In the absence of stimulation, interacts with BIRC2, DDX3X and GSK3B. The interaction with BIRC2 and DDX3X is further enhanced upon receptor stimulation and accompanied by DDX3X and BIRC2 cleavage. Palmitoylated. Palmitoylation by ZDHHC7 prevents the lysosomal degradation of FAS regulating its expression at the plasma membrane.

The protein localises to the cell membrane. Its subcellular location is the membrane raft. Its function is as follows. Receptor for TNFSF6/FASLG. The adapter molecule FADD recruits caspase-8 to the activated receptor. The resulting death-inducing signaling complex (DISC) performs caspase-8 proteolytic activation which initiates the subsequent cascade of caspases (aspartate-specific cysteine proteases) mediating apoptosis. FAS-mediated apoptosis may have a role in the induction of peripheral tolerance, in the antigen-stimulated suicide of mature T-cells, or both. The sequence is that of Tumor necrosis factor receptor superfamily member 6 (FAS) from Cercocebus atys (Sooty mangabey).